Reading from the N-terminus, the 229-residue chain is Non-structural protein P8 (229 aa).

2 helical membrane-spanning segments follow: residues I119–L139 and S162–A182.

The protein belongs to the orbivirus NS3 family. In terms of assembly, forms homooligomers via coiled-coil motif. Interacts with host OPTN; this interaction inhibits innate immune response.

Its subcellular location is the host cell membrane. The protein localises to the host Golgi apparatus. Functionally, plays a role in the inhibition of host innate immune response. Interacts with host OPTN and thus inhibits the recruitment of TBK1 to the host Golgi apparatus. In turn, downstream partner IRF3 cannot be activated and IFN-beta production is impaired. In terms of biological role, facilitates viral particle release either by increasing plasma membrane permeability through a viroporin-like activity or by viral budding. The polypeptide is Non-structural protein P8 (Segment-10) (Antilocapra americana (Pronghorn)).